We begin with the raw amino-acid sequence, 1121 residues long: MSDLVLGLDIGIGSVGVGILNKVTGEIIHKNSRIFPAAQAENNLVRRTNRQGRRLARRKKHRRVRLNRLFEESGLITDFTKISINLNPYQLRVKGLTDELSNEELFIALKNMVKHRGISYLDDASDDGNSSVGDYAQIVKENSKQLETKTPGQIQLERYQTYGQLRGDFTVEKDGKKHRLINVFPTSAYRSEALRILQTQQEFNPQITDEFINRYLEILTGKRKYYHGPGNEKSRTDYGRYRTSGETLDNIFGILIGKCTFYPDEFRAAKASYTAQEFNLLNDLNNLTVPTETKKLSKEQKNQIINYVKNEKAMGPAKLFKYIAKLLSCDVADIKGYRIDKSGKAEIHTFEAYRKMKTLETLDIEQMDRETLDKLAYVLTLNTEREGIQEALEHEFADGSFSQKQVDELVQFRKANSSIFGKGWHNFSVKLMMELIPELYETSEEQMTILTRLGKQKTTSSSNKTKYIDEKLLTEEIYNPVVAKSVRQAIKIVNAAIKEYGDFDNIVIEMARETNEDDEKKAIQKIQKANKDEKDAAMLKAANQYNGKAELPHSVFHGHKQLATKIRLWHQQGERCLYTGKTISIHDLINNSNQFEVDHILPLSITFDDSLANKVLVYATANQEKGQRTPYQALDSMDDAWSFRELKAFVRESKTLSNKKKEYLLTEEDISKFDVRKKFIERNLVDTRYASRVVLNALQEHFRAHKIDTKVSVVRGQFTSQLRRHWGIEKTRDTYHHHAVDALIIAASSQLNLWKKQKNTLVSYSEDQLLDIETGELISDDEYKESVFKAPYQHFVDTLKSKEFEDSILFSYQVDSKFNRKISDATIYATRQAKVGKDKADETYVLGKIKDIYTQDGYDAFMKIYKKDKSKFLMYRHDPQTFEKVIEPILENYPNKQINEKGKEVPCNPFLKYKEEHGYIRKYSKKGNGPEIKSLKYYDSKLGNHIDITPKDSNNKVVLQSVSPWRADVYFNKTTGKYEILGLKYADLQFEKGTGTYKISQEKYNDIKKKEGVDSDSEFKFTLYKNDLLLVKDTETKEQQLFRFLSRTMPKQKHYVELKPYDKQKFEGGEALIKVLGNVANSGQCKKGLGKSNISIYKVRTDVLGNQHIIKNEGDKPKLDF.

D9 serves as the catalytic For RuvC-like nuclease domain. Residues D9, E509, and E513 each contribute to the Mg(2+) site. One can recognise an HNH Cas9-type domain in the interval 516–684 (EDDEKKAIQK…VRKKFIERNL (169 aa)). H599 acts as the Proton acceptor for HNH nuclease domain in catalysis. Position 738 (H738) interacts with Mg(2+).

Belongs to the CRISPR-associated protein Cas9 family. Subtype II-A subfamily. Monomer. Binds crRNA and tracrRNA. Mg(2+) is required as a cofactor.

In terms of biological role, CRISPR (clustered regularly interspaced short palindromic repeat) is an adaptive immune system that provides protection against mobile genetic elements (viruses, transposable elements and conjugative plasmids). CRISPR clusters contain spacers, sequences complementary to antecedent mobile elements, and target invading nucleic acids. CRISPR clusters are transcribed and processed into CRISPR RNA (crRNA). In type II CRISPR systems correct processing of pre-crRNA requires a trans-encoded small RNA (tracrRNA), endogenous ribonuclease 3 (rnc) and this protein. The tracrRNA serves as a guide for ribonuclease 3-aided processing of pre-crRNA. Subsequently Cas9/crRNA/tracrRNA endonucleolytically cleaves linear or circular dsDNA target complementary to the spacer; Cas9 is inactive in the absence of the 2 guide RNAs (gRNA). Cas9 recognizes the protospacer adjacent motif (PAM) in the CRISPR repeat sequences to help distinguish self versus nonself, as targets within the bacterial CRISPR locus do not have PAMs. PAM recognition is also required for catalytic activity. Cuts target DNA when Cas9 and gRNAs are mixed. This is CRISPR-associated endonuclease Cas9 1 from Streptococcus thermophilus (strain ATCC BAA-491 / LMD-9).